We begin with the raw amino-acid sequence, 479 residues long: Glutamate--tRNA ligase (479 aa).

Positions 21–31 (PSPTGYLHVGG) match the 'HIGH' region motif. The 'KMSKS' region signature appears at 248-252 (KLSKR). Lys-251 is a binding site for ATP.

Belongs to the class-I aminoacyl-tRNA synthetase family. Glutamate--tRNA ligase type 1 subfamily. As to quaternary structure, monomer.

It is found in the cytoplasm. It catalyses the reaction tRNA(Glu) + L-glutamate + ATP = L-glutamyl-tRNA(Glu) + AMP + diphosphate. Catalyzes the attachment of glutamate to tRNA(Glu) in a two-step reaction: glutamate is first activated by ATP to form Glu-AMP and then transferred to the acceptor end of tRNA(Glu). This chain is Glutamate--tRNA ligase, found in Actinobacillus pleuropneumoniae serotype 5b (strain L20).